A 524-amino-acid chain; its full sequence is Probable lipid II flippase MurJ (524 aa).

Helical transmembrane passes span isoleucine 44–leucine 64, leucine 103–isoleucine 123, isoleucine 146–threonine 166, isoleucine 172–alanine 192, phenylalanine 195–valine 215, isoleucine 250–leucine 270, leucine 284–leucine 304, tryptophan 322–alanine 342, leucine 367–phenylalanine 387, proline 396–glycine 416, histidine 420–tryptophan 440, tryptophan 456–leucine 476, and leucine 494–phenylalanine 514.

Belongs to the MurJ/MviN family.

It localises to the cell inner membrane. Its pathway is cell wall biogenesis; peptidoglycan biosynthesis. Involved in peptidoglycan biosynthesis. Transports lipid-linked peptidoglycan precursors from the inner to the outer leaflet of the cytoplasmic membrane. The polypeptide is Probable lipid II flippase MurJ (Salmonella typhimurium (strain LT2 / SGSC1412 / ATCC 700720)).